The sequence spans 121 residues: Ribonuclease P protein component (121 aa).

It belongs to the RnpA family. As to quaternary structure, consists of a catalytic RNA component (M1 or rnpB) and a protein subunit.

It carries out the reaction Endonucleolytic cleavage of RNA, removing 5'-extranucleotides from tRNA precursor.. Functionally, RNaseP catalyzes the removal of the 5'-leader sequence from pre-tRNA to produce the mature 5'-terminus. It can also cleave other RNA substrates such as 4.5S RNA. The protein component plays an auxiliary but essential role in vivo by binding to the 5'-leader sequence and broadening the substrate specificity of the ribozyme. This Alcanivorax borkumensis (strain ATCC 700651 / DSM 11573 / NCIMB 13689 / SK2) protein is Ribonuclease P protein component.